The sequence spans 180 residues: Hypoxanthine-guanine phosphoribosyltransferase (180 aa).

GMP is bound by residues lysine 40, 99–107, lysine 131, and aspartate 159; that span reads EDIVDSGLT. Aspartate 103 functions as the Proton acceptor in the catalytic mechanism. A Mg(2+)-binding site is contributed by aspartate 159.

It belongs to the purine/pyrimidine phosphoribosyltransferase family. Mg(2+) is required as a cofactor.

The protein resides in the cytoplasm. The enzyme catalyses IMP + diphosphate = hypoxanthine + 5-phospho-alpha-D-ribose 1-diphosphate. It carries out the reaction GMP + diphosphate = guanine + 5-phospho-alpha-D-ribose 1-diphosphate. It functions in the pathway purine metabolism; IMP biosynthesis via salvage pathway; IMP from hypoxanthine: step 1/1. Functionally, converts guanine to guanosine monophosphate, and hypoxanthine to inosine monophosphate. Transfers the 5-phosphoribosyl group from 5-phosphoribosylpyrophosphate onto the purine. Plays a central role in the generation of purine nucleotides through the purine salvage pathway. The protein is Hypoxanthine-guanine phosphoribosyltransferase (hprT) of Dictyostelium discoideum (Social amoeba).